The following is a 640-amino-acid chain: 1,4-alpha-glucan branching enzyme GlgB (640 aa).

Asp-317 (nucleophile) is an active-site residue. Glu-370 serves as the catalytic Proton donor.

The protein belongs to the glycosyl hydrolase 13 family. GlgB subfamily. As to quaternary structure, monomer.

It carries out the reaction Transfers a segment of a (1-&gt;4)-alpha-D-glucan chain to a primary hydroxy group in a similar glucan chain.. It participates in glycan biosynthesis; glycogen biosynthesis. Functionally, catalyzes the formation of the alpha-1,6-glucosidic linkages in glycogen by scission of a 1,4-alpha-linked oligosaccharide from growing alpha-1,4-glucan chains and the subsequent attachment of the oligosaccharide to the alpha-1,6 position. The polypeptide is 1,4-alpha-glucan branching enzyme GlgB (Nitratidesulfovibrio vulgaris (strain DP4) (Desulfovibrio vulgaris)).